Reading from the N-terminus, the 143-residue chain is Nucleoside diphosphate kinase (143 aa).

Residues Lys-11, Phe-59, Arg-87, Thr-93, Arg-104, and Asn-114 each contribute to the ATP site. His-117 functions as the Pros-phosphohistidine intermediate in the catalytic mechanism.

It belongs to the NDK family. In terms of assembly, homotetramer. Requires Mg(2+) as cofactor.

The protein resides in the cytoplasm. The enzyme catalyses dZDP + ATP = dZTP + ADP. The catalysed reaction is a 2'-deoxyribonucleoside 5'-diphosphate + ATP = a 2'-deoxyribonucleoside 5'-triphosphate + ADP. It carries out the reaction a ribonucleoside 5'-diphosphate + ATP = a ribonucleoside 5'-triphosphate + ADP. It participates in purine metabolism. Functionally, major role in the synthesis of nucleoside triphosphates other than ATP. The ATP gamma phosphate is transferred to the NDP beta phosphate via a ping-pong mechanism, using a phosphorylated active-site intermediate. In terms of biological role, (Microbial infection) Catalyzes the phosphorylation of dZDP to dZTP, when the bacterium is infected by a phage that produces the substrate for the synthesis of dZTP (2- amino-2'-deoxyadenosine 5'-triphosphate), which is then used by the phage as a DNA polymerase substrate. The protein is Nucleoside diphosphate kinase of Acinetobacter baumannii (strain AB307-0294).